Consider the following 498-residue polypeptide: ATP synthase subunit beta, chloroplastic (498 aa).

G172–T179 contacts ATP.

Belongs to the ATPase alpha/beta chains family. As to quaternary structure, F-type ATPases have 2 components, CF(1) - the catalytic core - and CF(0) - the membrane proton channel. CF(1) has five subunits: alpha(3), beta(3), gamma(1), delta(1), epsilon(1). CF(0) has four main subunits: a(1), b(1), b'(1) and c(9-12).

The protein resides in the plastid. It is found in the chloroplast thylakoid membrane. It carries out the reaction ATP + H2O + 4 H(+)(in) = ADP + phosphate + 5 H(+)(out). Produces ATP from ADP in the presence of a proton gradient across the membrane. The catalytic sites are hosted primarily by the beta subunits. This is ATP synthase subunit beta, chloroplastic from Galbulimima belgraveana (Northern pigeonberry ash).